We begin with the raw amino-acid sequence, 343 residues long: Holliday junction branch migration complex subunit RuvB (343 aa).

The interval 1–178 is large ATPase domain (RuvB-L); the sequence is MNFVQQNREG…FGMILELQFY (178 aa). Residues L17, R18, G59, K62, T63, T64, 125 to 127, R168, Y178, and R215 contribute to the ATP site; that span reads EDY. T63 lines the Mg(2+) pocket. Positions 179-249 are small ATPAse domain (RuvB-S); that stretch reads TVKELMEIIK…LVEKTMDILE (71 aa). Positions 252–343 are head domain (RuvB-H); that stretch reads KLGLDEMDRK…DESLRKSDES (92 aa). DNA contacts are provided by R307 and R312.

This sequence belongs to the RuvB family. Homohexamer. Forms an RuvA(8)-RuvB(12)-Holliday junction (HJ) complex. HJ DNA is sandwiched between 2 RuvA tetramers; dsDNA enters through RuvA and exits via RuvB. An RuvB hexamer assembles on each DNA strand where it exits the tetramer. Each RuvB hexamer is contacted by two RuvA subunits (via domain III) on 2 adjacent RuvB subunits; this complex drives branch migration. In the full resolvosome a probable DNA-RuvA(4)-RuvB(12)-RuvC(2) complex forms which resolves the HJ.

It is found in the cytoplasm. It catalyses the reaction ATP + H2O = ADP + phosphate + H(+). The RuvA-RuvB-RuvC complex processes Holliday junction (HJ) DNA during genetic recombination and DNA repair, while the RuvA-RuvB complex plays an important role in the rescue of blocked DNA replication forks via replication fork reversal (RFR). RuvA specifically binds to HJ cruciform DNA, conferring on it an open structure. The RuvB hexamer acts as an ATP-dependent pump, pulling dsDNA into and through the RuvAB complex. RuvB forms 2 homohexamers on either side of HJ DNA bound by 1 or 2 RuvA tetramers; 4 subunits per hexamer contact DNA at a time. Coordinated motions by a converter formed by DNA-disengaged RuvB subunits stimulates ATP hydrolysis and nucleotide exchange. Immobilization of the converter enables RuvB to convert the ATP-contained energy into a lever motion, pulling 2 nucleotides of DNA out of the RuvA tetramer per ATP hydrolyzed, thus driving DNA branch migration. The RuvB motors rotate together with the DNA substrate, which together with the progressing nucleotide cycle form the mechanistic basis for DNA recombination by continuous HJ branch migration. Branch migration allows RuvC to scan DNA until it finds its consensus sequence, where it cleaves and resolves cruciform DNA. The polypeptide is Holliday junction branch migration complex subunit RuvB (Pseudothermotoga lettingae (strain ATCC BAA-301 / DSM 14385 / NBRC 107922 / TMO) (Thermotoga lettingae)).